A 125-amino-acid polypeptide reads, in one-letter code: Fluoride-specific ion channel FluC (125 aa).

Helical transmembrane passes span 4–24, 35–55, 68–88, and 100–120; these read IALVATGGAIGSVFRYLVGVW, WGTLAVNIVGSFLIGLLVELV, FLVTGVLGGFTTFSSFSLDAV, and AFYILASLVVSIAAVFAGLAL. G75 and T78 together coordinate Na(+).

Belongs to the fluoride channel Fluc/FEX (TC 1.A.43) family.

It is found in the cell inner membrane. The catalysed reaction is fluoride(in) = fluoride(out). With respect to regulation, na(+) is not transported, but it plays an essential structural role and its presence is essential for fluoride channel function. Its function is as follows. Fluoride-specific ion channel. Important for reducing fluoride concentration in the cell, thus reducing its toxicity. The protein is Fluoride-specific ion channel FluC of Agrobacterium fabrum (strain C58 / ATCC 33970) (Agrobacterium tumefaciens (strain C58)).